We begin with the raw amino-acid sequence, 92 residues long: Alpha-conotoxin FrXXA (92 aa).

A signal peptide spans 1–24; it reads MPKLEMMLLVLLILPLSYFDSAGG. The propeptide occupies 25–45; that stretch reads QAVKVDGHGDGMDRYLQRDDR. 4 disulfides stabilise this stretch: Cys63–Cys72, Cys68–Cys80, Cys73–Cys90, and Cys78–Cys92.

It belongs to the conotoxin D superfamily. Homodimer; disulfide-linked. Post-translationally, the homodimer contains 10 disulfide bonds. As to expression, expressed by the venom duct.

The protein resides in the secreted. Functionally, alpha-conotoxins act on postsynaptic membranes, they bind to the nicotinic acetylcholine receptors (nAChR) and thus inhibit them. Through its two C-terminal domains, this homodimeric protein would bind to two nAChR allosteric sites, located outside the nAChR C-loop of the principal binding face and at the adjacent binding interface in a clockwise direction. This toxin blocks both neuronal and muscular subtypes: human alpha-7/CHRNA7, human alpha-3-beta-2 (CHRNA3-CHRNB2), human alpha-4-beta-2 (CHRNA4-CHRNB2), mouse adult muscular subtype alpha-1-beta-1-delta-epsilon (CHRNA1-CHRNB1-CHRND-CHRNE), and mouse fetal muscular subtype alpha-1-beta-1-gamma-delta (CHRNA1-CHRNB1-CHRNG-CHRND). Shows different dissociation rates towards the different subtypes, with a very slow rate towards alpha-7 subtype (almost irreversible), followed by the adult muscular subtype, the fetal muscular subtype, alpha-3-beta-2 and alpha-4-beta-2 (almost entirely reversible within a few minutes of washing). This chain is Alpha-conotoxin FrXXA, found in Conus fergusoni (Ferguson's cone).